Reading from the N-terminus, the 382-residue chain is Histidinol-phosphate aminotransferase (382 aa).

Residues 1-28 (MTSAPRPRPTLDDLPLREDLRGKSPYGA) form a disordered region. The span at 9–22 (PTLDDLPLREDLRG) shows a compositional bias: basic and acidic residues. Lysine 233 carries the post-translational modification N6-(pyridoxal phosphate)lysine.

It belongs to the class-II pyridoxal-phosphate-dependent aminotransferase family. Histidinol-phosphate aminotransferase subfamily. In terms of assembly, homodimer. Pyridoxal 5'-phosphate is required as a cofactor.

The catalysed reaction is L-histidinol phosphate + 2-oxoglutarate = 3-(imidazol-4-yl)-2-oxopropyl phosphate + L-glutamate. Its pathway is amino-acid biosynthesis; L-histidine biosynthesis; L-histidine from 5-phospho-alpha-D-ribose 1-diphosphate: step 7/9. The polypeptide is Histidinol-phosphate aminotransferase (Mycobacterium marinum (strain ATCC BAA-535 / M)).